Consider the following 331-residue polypeptide: Flagellar P-ring protein (331 aa).

An N-terminal signal peptide occupies residues 1–22; that stretch reads MRKVTIFIIIIVALTGFGSVRI.

Belongs to the FlgI family. As to quaternary structure, the basal body constitutes a major portion of the flagellar organelle and consists of four rings (L,P,S, and M) mounted on a central rod.

Its subcellular location is the periplasm. The protein localises to the bacterial flagellum basal body. Functionally, assembles around the rod to form the L-ring and probably protects the motor/basal body from shearing forces during rotation. In Pseudothermotoga lettingae (strain ATCC BAA-301 / DSM 14385 / NBRC 107922 / TMO) (Thermotoga lettingae), this protein is Flagellar P-ring protein.